A 285-amino-acid chain; its full sequence is Bifunctional protein FolD (285 aa).

NADP(+)-binding positions include 165–167 and S190; that span reads GRS.

It belongs to the tetrahydrofolate dehydrogenase/cyclohydrolase family. As to quaternary structure, homodimer.

The catalysed reaction is (6R)-5,10-methylene-5,6,7,8-tetrahydrofolate + NADP(+) = (6R)-5,10-methenyltetrahydrofolate + NADPH. The enzyme catalyses (6R)-5,10-methenyltetrahydrofolate + H2O = (6R)-10-formyltetrahydrofolate + H(+). Its pathway is one-carbon metabolism; tetrahydrofolate interconversion. Its function is as follows. Catalyzes the oxidation of 5,10-methylenetetrahydrofolate to 5,10-methenyltetrahydrofolate and then the hydrolysis of 5,10-methenyltetrahydrofolate to 10-formyltetrahydrofolate. In Streptococcus pneumoniae (strain ATCC BAA-255 / R6), this protein is Bifunctional protein FolD.